The sequence spans 423 residues: MAALAAGEPFSGRATGGDGGVRSDVMAPPAMAEEAKVSCLPLAREVGRRAAAAGGGQGRNFIVSPLSFHAALALVADGARGETQRELLGFLGSPSLAELHRSPTTRLVARLRHLPNTSFACGVWVDRGRALTPEFADAAASRYAAVAEPADFATQPEQARERVNAFVSDATEGLIRDVLPPNSVDSSTVVVLANAVHFKGTWSLPFHPSATFHAPFHLLDGGAVRAPFMTTEIPFERHVAAFPGFTALKLPYKNVGGGGGGDGVPRAAFYMLLLLPDGDGALKLADLYDMAVTTPEFIKKHTPAAEAPVRRLMVPKFKFSFKFEAKSDMRKLGVTRAFAGGDFSGMVTGGDGLFIAEVYHQATIEVDELGTVAAASTAVVMMQKGSSLPPVDFVADRPFLFAVVEELTGAVLFLGHVVNPLAE.

Positions 1-25 are disordered; sequence MAALAAGEPFSGRATGGDGGVRSDV. Residues 370 to 394 form an RCL region; the sequence is GTVAAASTAVVMMQKGSSLPPVDFV.

It belongs to the serpin family.

Its function is as follows. Probable serine protease inhibitor. In Oryza sativa subsp. japonica (Rice), this protein is Putative serpin-Z12.